A 567-amino-acid polypeptide reads, in one-letter code: 2-succinyl-5-enolpyruvyl-6-hydroxy-3-cyclohexene-1-carboxylate synthase (567 aa).

This sequence belongs to the TPP enzyme family. MenD subfamily. As to quaternary structure, homodimer. Requires Mg(2+) as cofactor. Mn(2+) is required as a cofactor. Thiamine diphosphate serves as cofactor.

It carries out the reaction isochorismate + 2-oxoglutarate + H(+) = 5-enolpyruvoyl-6-hydroxy-2-succinyl-cyclohex-3-ene-1-carboxylate + CO2. Its pathway is quinol/quinone metabolism; 1,4-dihydroxy-2-naphthoate biosynthesis; 1,4-dihydroxy-2-naphthoate from chorismate: step 2/7. The protein operates within quinol/quinone metabolism; menaquinone biosynthesis. Its function is as follows. Catalyzes the thiamine diphosphate-dependent decarboxylation of 2-oxoglutarate and the subsequent addition of the resulting succinic semialdehyde-thiamine pyrophosphate anion to isochorismate to yield 2-succinyl-5-enolpyruvyl-6-hydroxy-3-cyclohexene-1-carboxylate (SEPHCHC). The sequence is that of 2-succinyl-5-enolpyruvyl-6-hydroxy-3-cyclohexene-1-carboxylate synthase from Yersinia pseudotuberculosis serotype I (strain IP32953).